The sequence spans 389 residues: S-adenosylmethionine synthase (389 aa).

H16 lines the ATP pocket. Position 18 (D18) interacts with Mg(2+). E44 is a K(+) binding site. The L-methionine site is built by E57 and Q101. A flexible loop region spans residues 101-111 (QSVDIAQGVNE). ATP contacts are provided by residues 168-170 (DAK), 234-235 (RF), D243, 249-250 (RK), A266, and K270. Position 243 (D243) interacts with L-methionine. Position 274 (K274) interacts with L-methionine.

It belongs to the AdoMet synthase family. As to quaternary structure, homotetramer; dimer of dimers. Mg(2+) serves as cofactor. The cofactor is K(+).

The protein localises to the cytoplasm. It carries out the reaction L-methionine + ATP + H2O = S-adenosyl-L-methionine + phosphate + diphosphate. Its pathway is amino-acid biosynthesis; S-adenosyl-L-methionine biosynthesis; S-adenosyl-L-methionine from L-methionine: step 1/1. In terms of biological role, catalyzes the formation of S-adenosylmethionine (AdoMet) from methionine and ATP. The overall synthetic reaction is composed of two sequential steps, AdoMet formation and the subsequent tripolyphosphate hydrolysis which occurs prior to release of AdoMet from the enzyme. The protein is S-adenosylmethionine synthase of Magnetococcus marinus (strain ATCC BAA-1437 / JCM 17883 / MC-1).